The following is a 665-amino-acid chain: Methionine--tRNA ligase (665 aa).

The 'HIGH' region motif lies at 12 to 22 (YYPSGKLHIGS). The 'KMSKS' region signature appears at 308 to 312 (KMSKS). Lys-311 lines the ATP pocket. Residues 562–665 (TFDAVEIRVA…SSVPNGSIIG (104 aa)) enclose the tRNA-binding domain.

Belongs to the class-I aminoacyl-tRNA synthetase family. MetG type 2B subfamily. Homodimer.

It is found in the cytoplasm. It catalyses the reaction tRNA(Met) + L-methionine + ATP = L-methionyl-tRNA(Met) + AMP + diphosphate. Functionally, is required not only for elongation of protein synthesis but also for the initiation of all mRNA translation through initiator tRNA(fMet) aminoacylation. The sequence is that of Methionine--tRNA ligase (metG) from Streptococcus pyogenes serotype M3 (strain SSI-1).